The chain runs to 403 residues: Malate dehydrogenase, chloroplastic (403 aa).

The transit peptide at 1-80 directs the protein to the chloroplast; it reads MATATSASLF…DKKPYGFKIN (80 aa). NAD(+)-binding positions include 89 to 95 and D115; that span reads GAAGGIG. Substrate contacts are provided by R162 and R168. Residues N175 and 198 to 200 contribute to the NAD(+) site; that span reads ISN. The substrate site is built by N200 and R234. H258 serves as the catalytic Proton acceptor. NAD(+) is bound at residue M309.

This sequence belongs to the LDH/MDH superfamily. MDH type 1 family. Homodimer. As to expression, expressed in rosette leaves. Expressed in meristematic regions of roots and shoots, cotyledons, young leaves, trichomes, stamen, pollen, tapetum, gynoecium and ovules.

Its subcellular location is the plastid. It localises to the chloroplast stroma. It carries out the reaction (S)-malate + NAD(+) = oxaloacetate + NADH + H(+). In terms of biological role, catalyzes a reversible NAD-dependent dehydrogenase reaction involved in central metabolism and redox homeostasis between organelle compartments. Plays a key role in the metabolism of dark chloroplasts and non-green plastids. Essential for embryo viability. Plays an essential role in heterotrophic metabolism in embryos, and autotrophic metabolism in photosynthetic tissues as well. The polypeptide is Malate dehydrogenase, chloroplastic (Arabidopsis thaliana (Mouse-ear cress)).